The following is a 560-amino-acid chain: Nuclear receptor subfamily 5 group A member 2 (560 aa).

The segment at 21–55 (IASAPGSETRHSPKREEQLREKRAGLPDRHRRPIP) is disordered. A compositionally biased stretch (basic and acidic residues) spans 28–48 (ETRHSPKREEQLREKRAGLPD). The segment at residues 104-175 (EELCPVCGDK…KCIDVGMKLE (72 aa)) is a DNA-binding region (nuclear receptor). 8 residues coordinate Zn(2+): cysteine 107, cysteine 110, cysteine 124, cysteine 127, cysteine 143, cysteine 149, cysteine 159, and cysteine 162. 2 consecutive NR C4-type zinc fingers follow at residues 107–127 (CPVCGDKVSGYHYGLLTCESC) and 143–167 (CIENQNCQIDKTQRKRCPYCRFKKC). The C-terminal extension (CTE) stretch occupies residues 173 to 188 (KLEAVRADRMRGGRNK). The FTZ-F1 box motif lies at 189–208 (FGPMYKRDRALKQQKKALIR). Lysine 289 is covalently cross-linked (Glycyl lysine isopeptide (Lys-Gly) (interchain with G-Cter in SUMO1)). The region spanning 319–558 (SIPHLILELL…NLLIEMLHAK (240 aa)) is the NR LBD domain. The a phospholipid derivative site is built by tyrosine 535 and lysine 539. The AF-2 stretch occupies residues 547–558 (YNNLLIEMLHAK).

The protein belongs to the nuclear hormone receptor family. NR5 subfamily. Monomer; Binds DNA as a monomer. Interacts with nuclear receptor corepressors NR0B1 and NR0B2; repressing NR5A2 nuclear receptor activity. Interacts with nuclear receptor coactivators CTNNB1, PPARGC1A and NCOA2; interaction takes place following ligand-binding and promotes target gene activation. Interacts (when sumoylated) with GPS2; interaction with GPS2 onto hepatic acute phase protein promoters prevents N-Cor corepressor complex dissociation. Interacts with HNF1A. Interacts with GRIP1. Sumoylated by SUMO1 at Lys-289 during the hepatic acute phase response, leading to promote interaction with GPS2 and prevent N-Cor corepressor complex dissociation.

The protein resides in the nucleus. It is found in the chromosome. Functionally, orphan nuclear receptor that binds DNA as a monomer to the 5'-TCAAGGCCA-3' sequence and controls expression of target genes: regulates key biological processes, such as early embryonic development, cholesterol and bile acid synthesis pathways, as well as liver and pancreas morphogenesis. Ligand-binding causes conformational change which causes recruitment of coactivators, promoting target gene activation. The specific ligand is unknown, but specific phospholipids, such as phosphatidylethanolamine, phosphatidylserine, dilauroyl phosphatidylcholine and diundecanoyl phosphatidylcholine can act as ligand in vitro. Acts as a pioneer transcription factor, which unwraps target DNA from histones and elicits local opening of closed chromatin. Plays a central role during preimplantation stages of embryonic development. Plays a minor role in zygotic genome activation (ZGA) by regulating a small set of two-cell stage genes. Plays a major role in morula development (2-16 cells embryos) by acting as a master regulator at the 8-cell stage, controlling expression of lineage-specifying transcription factors and genes involved in mitosis, telomere maintenance and DNA repair. Zygotic NR5A2 binds to both closed and open chromatin with other transcription factors, often at SINE B1/Alu repeats DNA elements, promoting chromatin accessibility at nearby regulatory regions. Also involved in the epiblast stage of development and embryonic stem cell pluripotency, by promoting expression of POU5F1/OCT4. Regulates other processes later in development, such as formation of connective tissue in lower jaw and middle ear, neural stem cell differentiation, ovarian follicle development and Sertoli cell differentiation. Involved in exocrine pancreas development and acinar cell differentiation. Acts as an essential transcriptional regulator of lipid metabolism. Key regulator of cholesterol 7-alpha-hydroxylase gene (CYP7A) expression in liver. Activates the transcription of CYP2C38. Also acts as a negative regulator of inflammation in different organs, such as intestine, liver and pancreas. Protects against intestinal inflammation via its ability to regulate glucocorticoid production. Plays an anti-inflammatory role during the hepatic acute phase response by acting as a corepressor: inhibits the hepatic acute phase response by preventing dissociation of the N-Cor corepressor complex. Acts as a regulator of immunity by promoting lymphocyte T-cell development, proliferation and effector functions. Also involved in resolution of endoplasmic reticulum stress in the liver. This is Nuclear receptor subfamily 5 group A member 2 from Mus musculus (Mouse).